Consider the following 447-residue polypeptide: Phosphoglucosamine mutase (447 aa).

Residue Ser-100 is the Phosphoserine intermediate of the active site. Mg(2+) is bound by residues Ser-100, Asp-239, Asp-241, and Asp-243. Ser-100 carries the phosphoserine modification.

The protein belongs to the phosphohexose mutase family. The cofactor is Mg(2+). Activated by phosphorylation.

It catalyses the reaction alpha-D-glucosamine 1-phosphate = D-glucosamine 6-phosphate. Functionally, catalyzes the conversion of glucosamine-6-phosphate to glucosamine-1-phosphate. This is Phosphoglucosamine mutase from Thermoanaerobacter sp. (strain X514).